Reading from the N-terminus, the 616-residue chain is Chaperone protein HtpG (616 aa).

Residues Met1–Arg333 form an a; substrate-binding region. The interval Glu334–Lys542 is b. The tract at residues Ile543 to Leu616 is c.

Belongs to the heat shock protein 90 family. As to quaternary structure, homodimer.

The protein localises to the cytoplasm. Functionally, molecular chaperone. Has ATPase activity. This Borreliella afzelii (strain PKo) (Borrelia afzelii) protein is Chaperone protein HtpG.